A 299-amino-acid polypeptide reads, in one-letter code: Probable 3-hydroxyisobutyrate dehydrogenase-like 2, mitochondrial (299 aa).

NAD(+) contacts are provided by residues 14–43 (TRIG…TVYA) and Ser-108. Lys-182 is a catalytic residue. An NAD(+)-binding site is contributed by Lys-250.

Belongs to the HIBADH-related family. 3-hydroxyisobutyrate dehydrogenase subfamily.

The protein localises to the mitochondrion. It carries out the reaction 3-hydroxy-2-methylpropanoate + NAD(+) = 2-methyl-3-oxopropanoate + NADH + H(+). It participates in amino-acid degradation; L-valine degradation. The polypeptide is Probable 3-hydroxyisobutyrate dehydrogenase-like 2, mitochondrial (Arabidopsis thaliana (Mouse-ear cress)).